The sequence spans 338 residues: Fructose-1,6-bisphosphatase 1 (338 aa).

T2 is subject to N-acetylthreonine. Residues V18–G22 and T28–T32 contribute to the AMP site. D69 and E98 together coordinate Mg(2+). K113–Y114 contacts AMP. D119, L121, and D122 together coordinate Mg(2+). Substrate is bound at residue D122–S125. Residue R141 coordinates AMP. At K151 the chain carries N6-succinyllysine. S208 carries the post-translational modification Phosphoserine; by PKA. Residues N213–Y216, R244–M249, Y265, and K275–R277 contribute to the substrate site. Phosphotyrosine is present on residues Y216, Y245, and Y265. E281 serves as a coordination point for Mg(2+).

This sequence belongs to the FBPase class 1 family. Homotetramer. Mg(2+) serves as cofactor.

It catalyses the reaction beta-D-fructose 1,6-bisphosphate + H2O = beta-D-fructose 6-phosphate + phosphate. It participates in carbohydrate biosynthesis; gluconeogenesis. Its activity is regulated as follows. Subject to complex allosteric regulation. The enzyme can assume an active R-state, or an inactive T-state. Intermediate conformations may exist. AMP acts as an allosteric inhibitor. AMP binding affects the turnover of bound substrate and not the affinity for substrate. Fructose 2,6-bisphosphate acts as a competitive inhibitor. Fructose 2,6-bisphosphate and AMP have synergistic effects. In terms of biological role, catalyzes the hydrolysis of fructose 1,6-bisphosphate to fructose 6-phosphate in the presence of divalent cations, acting as a rate-limiting enzyme in gluconeogenesis. Plays a role in regulating glucose sensing and insulin secretion of pancreatic beta-cells. Appears to modulate glycerol gluconeogenesis in liver. Important regulator of appetite and adiposity; increased expression of the protein in liver after nutrient excess increases circulating satiety hormones and reduces appetite-stimulating neuropeptides and thus seems to provide a feedback mechanism to limit weight gain. This is Fructose-1,6-bisphosphatase 1 (FBP1) from Sus scrofa (Pig).